Consider the following 292-residue polypeptide: Ribosomal RNA small subunit methyltransferase A (292 aa).

6 residues coordinate S-adenosyl-L-methionine: N29, L31, G56, E77, D102, and N127.

The protein belongs to the class I-like SAM-binding methyltransferase superfamily. rRNA adenine N(6)-methyltransferase family. RsmA subfamily.

It localises to the cytoplasm. It catalyses the reaction adenosine(1518)/adenosine(1519) in 16S rRNA + 4 S-adenosyl-L-methionine = N(6)-dimethyladenosine(1518)/N(6)-dimethyladenosine(1519) in 16S rRNA + 4 S-adenosyl-L-homocysteine + 4 H(+). In terms of biological role, specifically dimethylates two adjacent adenosines (A1518 and A1519) in the loop of a conserved hairpin near the 3'-end of 16S rRNA in the 30S particle. May play a critical role in biogenesis of 30S subunits. The chain is Ribosomal RNA small subunit methyltransferase A from Bacillus licheniformis (strain ATCC 14580 / DSM 13 / JCM 2505 / CCUG 7422 / NBRC 12200 / NCIMB 9375 / NCTC 10341 / NRRL NRS-1264 / Gibson 46).